Reading from the N-terminus, the 428-residue chain is Trigger factor (428 aa).

The PPIase FKBP-type domain occupies 163-248 (GDIVDIDFEG…VNDVKVKELP (86 aa)).

Belongs to the FKBP-type PPIase family. Tig subfamily.

The protein localises to the cytoplasm. It catalyses the reaction [protein]-peptidylproline (omega=180) = [protein]-peptidylproline (omega=0). Functionally, involved in protein export. Acts as a chaperone by maintaining the newly synthesized protein in an open conformation. Functions as a peptidyl-prolyl cis-trans isomerase. This is Trigger factor from Acetivibrio thermocellus (strain ATCC 27405 / DSM 1237 / JCM 9322 / NBRC 103400 / NCIMB 10682 / NRRL B-4536 / VPI 7372) (Clostridium thermocellum).